The chain runs to 326 residues: Biotin synthase (326 aa).

The Radical SAM core domain occupies 41–271; it reads YHVQLASLLS…EARVRLSAGR (231 aa). [4Fe-4S] cluster-binding residues include Cys56, Cys60, and Cys63. [2Fe-2S] cluster-binding residues include Cys102, Cys134, Cys194, and Arg266.

This sequence belongs to the radical SAM superfamily. Biotin synthase family. In terms of assembly, homodimer. Requires [4Fe-4S] cluster as cofactor. The cofactor is [2Fe-2S] cluster.

The enzyme catalyses (4R,5S)-dethiobiotin + (sulfur carrier)-SH + 2 reduced [2Fe-2S]-[ferredoxin] + 2 S-adenosyl-L-methionine = (sulfur carrier)-H + biotin + 2 5'-deoxyadenosine + 2 L-methionine + 2 oxidized [2Fe-2S]-[ferredoxin]. It participates in cofactor biosynthesis; biotin biosynthesis; biotin from 7,8-diaminononanoate: step 2/2. Functionally, catalyzes the conversion of dethiobiotin (DTB) to biotin by the insertion of a sulfur atom into dethiobiotin via a radical-based mechanism. The polypeptide is Biotin synthase (Synechococcus sp. (strain RCC307)).